The primary structure comprises 574 residues: MNHDQAVLNRVWCNTLLEELARSGVEHVCVAPGSRSTPLTLEAEANPKLTLHTHFDERGLGFLALGLAKASNKPVAVIVTSGTAVANLLPATAESGLTREKLILLTSDRPIDLVDCGANQAIQQQGIFSSHVESALNLPSPTTQISLNWLLTSVDNALAKQRNVGGAIHINCPFPEPLYSANSAEMYAEYTSSISGWKSGTACYSQTFLPNQVNTQPIAPSEYLGRKGVVILGSLDIEQATKAQQFATALGWPVFCDPQSGVTSDWKHYDLWMQSDVAKAQLNQCDFILQFGERVVSKRLNHWIKSQASSFCSSQYIVVSPDTHRINQDHLPQTHIVADIESWVSEQHLPTLLGQHAGWAAPLVEIANTVQQLALAQISNNDQLTELSVAVDLSTRLKDRELFVGNSLMVRLVDMLSSISANQVYSNRGASGIDGLVATAAGVVKANQNPLIMLIGDTSLLYDLNSLALFTHNVTPMVIVVTNNDGGAIFDLLPVPEQQKQSLYQMPHGFSFEHAAAQFQLGYAAPETLNGYQTIVEQHFEQGQGTLLVEVKTPPEQAATLLKQFSAMLIEALA.

The protein belongs to the TPP enzyme family. MenD subfamily. As to quaternary structure, homodimer. Mg(2+) is required as a cofactor. It depends on Mn(2+) as a cofactor. The cofactor is thiamine diphosphate.

The enzyme catalyses isochorismate + 2-oxoglutarate + H(+) = 5-enolpyruvoyl-6-hydroxy-2-succinyl-cyclohex-3-ene-1-carboxylate + CO2. The protein operates within quinol/quinone metabolism; 1,4-dihydroxy-2-naphthoate biosynthesis; 1,4-dihydroxy-2-naphthoate from chorismate: step 2/7. It participates in quinol/quinone metabolism; menaquinone biosynthesis. In terms of biological role, catalyzes the thiamine diphosphate-dependent decarboxylation of 2-oxoglutarate and the subsequent addition of the resulting succinic semialdehyde-thiamine pyrophosphate anion to isochorismate to yield 2-succinyl-5-enolpyruvyl-6-hydroxy-3-cyclohexene-1-carboxylate (SEPHCHC). The protein is 2-succinyl-5-enolpyruvyl-6-hydroxy-3-cyclohexene-1-carboxylate synthase of Vibrio atlanticus (strain LGP32) (Vibrio splendidus (strain Mel32)).